Reading from the N-terminus, the 190-residue chain is Probable E3 ubiquitin-protein ligase RHB1A (190 aa).

The RING-type; atypical zinc finger occupies 139–180 (CPICFEDYDVENPRLTTKCEHEFHLSCLLEWIERSDRCPICD).

The catalysed reaction is S-ubiquitinyl-[E2 ubiquitin-conjugating enzyme]-L-cysteine + [acceptor protein]-L-lysine = [E2 ubiquitin-conjugating enzyme]-L-cysteine + N(6)-ubiquitinyl-[acceptor protein]-L-lysine.. It functions in the pathway protein modification; protein ubiquitination. Its function is as follows. Probable E3 ubiquitin-protein ligase that may possess E3 ubiquitin ligase activity in vitro. This chain is Probable E3 ubiquitin-protein ligase RHB1A, found in Arabidopsis thaliana (Mouse-ear cress).